The sequence spans 508 residues: Protein S-acyltransferase 18 (508 aa).

2 consecutive transmembrane segments (helical) span residues 17–37 and 42–62; these read IVGA…LGFF and IAVI…IVLF. The DHHC domain occupies 158 to 208; it reads SYCSLCDLEVKRSSKHCRTCNRCVEGFDHHCRWLNNCVGKKNYTTFILLMV. Cysteine 188 serves as the catalytic S-palmitoyl cysteine intermediate. 2 helical membrane passes run 203-223 and 250-270; these read FILL…TALA and WALA…SAAM. Residues 443-468 are disordered; it reads VSPGRFSSPRRRFSGSSSSTVPSPKQ. The segment covering 456–466 has biased composition (low complexity); it reads SGSSSSTVPSP.

The protein belongs to the DHHC palmitoyltransferase family.

The protein localises to the endoplasmic reticulum membrane. It localises to the cytoplasmic vesicle membrane. It carries out the reaction L-cysteinyl-[protein] + hexadecanoyl-CoA = S-hexadecanoyl-L-cysteinyl-[protein] + CoA. Functionally, S-acyltransferase involved in protein lipid modification. The sequence is that of Protein S-acyltransferase 18 (PAT18) from Arabidopsis thaliana (Mouse-ear cress).